The following is a 496-amino-acid chain: L-arabinose isomerase (496 aa).

Residues Glu305, Glu330, His347, and His446 each contribute to the Mn(2+) site.

It belongs to the arabinose isomerase family. Mn(2+) serves as cofactor.

The enzyme catalyses beta-L-arabinopyranose = L-ribulose. It participates in carbohydrate degradation; L-arabinose degradation via L-ribulose; D-xylulose 5-phosphate from L-arabinose (bacterial route): step 1/3. Its function is as follows. Catalyzes the conversion of L-arabinose to L-ribulose. The chain is L-arabinose isomerase from Bacillus subtilis (strain 168).